A 337-amino-acid polypeptide reads, in one-letter code: 4-hydroxyproline 2-epimerase 2 (337 aa).

Cys90 functions as the Proton acceptor in the catalytic mechanism. Substrate-binding positions include 91-92 (GH), His223, and Asp249. The Proton donor role is filled by Cys253. Residue 254–255 (GT) participates in substrate binding.

It belongs to the proline racemase family.

The catalysed reaction is trans-4-hydroxy-L-proline = cis-4-hydroxy-D-proline. Catalyzes the epimerization of trans-4-hydroxy-L-proline (t4LHyp) to cis-4-hydroxy-D-proline (c4DHyp). Is likely involved in a degradation pathway that converts t4LHyp to alpha-ketoglutarate. Can also catalyze the epimerization of trans-3-hydroxy-L-proline (t3LHyp) to cis-3-hydroxy-D-proline (c3DHyp), albeit with 170-fold lower efficiency. Displays no proline racemase activity. The chain is 4-hydroxyproline 2-epimerase 2 from Brucella anthropi (strain ATCC 49188 / DSM 6882 / CCUG 24695 / JCM 21032 / LMG 3331 / NBRC 15819 / NCTC 12168 / Alc 37) (Ochrobactrum anthropi).